The following is a 130-amino-acid chain: Small ribosomal subunit protein uS8 (130 aa).

This sequence belongs to the universal ribosomal protein uS8 family. In terms of assembly, part of the 30S ribosomal subunit.

In terms of biological role, one of the primary rRNA binding proteins, it binds directly to 16S rRNA central domain where it helps coordinate assembly of the platform of the 30S subunit. This Methanococcus maripaludis (strain C5 / ATCC BAA-1333) protein is Small ribosomal subunit protein uS8.